The chain runs to 208 residues: MVSRRVQALLDQLRAQGIQDELVLNALAAVPREKFVDEAFEQKAWDNIALPIGQGQTISQPYMVARMTELLELTPQSRVLEIGTGSGYQTAILAHLVQHVCSVERIKGLQWQARRRLKNLDLHNVSTRHGDGWQGWQARAPFDAIIVTAAPPEIPTALMTQLDEGGILVLPVGEEHQYLKRVRRRGGEFIIDTVEAVRFVPLVKGELA.

Ser-59 is a catalytic residue.

It belongs to the methyltransferase superfamily. L-isoaspartyl/D-aspartyl protein methyltransferase family.

Its subcellular location is the cytoplasm. It carries out the reaction [protein]-L-isoaspartate + S-adenosyl-L-methionine = [protein]-L-isoaspartate alpha-methyl ester + S-adenosyl-L-homocysteine. Catalyzes the methyl esterification of L-isoaspartyl residues in peptides and proteins that result from spontaneous decomposition of normal L-aspartyl and L-asparaginyl residues. It plays a role in the repair and/or degradation of damaged proteins. The protein is Protein-L-isoaspartate O-methyltransferase of Escherichia coli O1:K1 / APEC.